The following is a 115-amino-acid chain: Type 3 secretion system chaperone PscG (115 aa).

The protein belongs to the YscG family. As to quaternary structure, forms a stable heterotrimeric complex with PscE and PscF/SctF in the cytoplasm. Co-stabilized by PscE.

It is found in the cytoplasm. In terms of biological role, chaperone of the type III secretion system (T3SS), also called injectisome, which is used to inject bacterial effector proteins into eukaryotic host cells, facilitating the establishment and dissemination of infection. Along with PscE, prevents premature polymerization of the PscF/SctF needle protein within the cytoplasm. Required for type III secretion needle assembly. Also required for cytotoxicity by influencing PscF/SctF levels. This is Type 3 secretion system chaperone PscG (pscG) from Pseudomonas aeruginosa (strain ATCC 15692 / DSM 22644 / CIP 104116 / JCM 14847 / LMG 12228 / 1C / PRS 101 / PAO1).